We begin with the raw amino-acid sequence, 333 residues long: Anthranilate phosphoribosyltransferase (333 aa).

5-phospho-alpha-D-ribose 1-diphosphate-binding positions include glycine 81, 84–85 (GD), threonine 89, 91–94 (NIST), 109–117 (KHGNRSVSS), and alanine 121. Glycine 81 serves as a coordination point for anthranilate. Serine 93 provides a ligand contact to Mg(2+). Asparagine 112 lines the anthranilate pocket. Arginine 167 is a binding site for anthranilate. Residues aspartate 225 and glutamate 226 each contribute to the Mg(2+) site.

Belongs to the anthranilate phosphoribosyltransferase family. As to quaternary structure, homodimer. It depends on Mg(2+) as a cofactor.

It carries out the reaction N-(5-phospho-beta-D-ribosyl)anthranilate + diphosphate = 5-phospho-alpha-D-ribose 1-diphosphate + anthranilate. The protein operates within amino-acid biosynthesis; L-tryptophan biosynthesis; L-tryptophan from chorismate: step 2/5. Functionally, catalyzes the transfer of the phosphoribosyl group of 5-phosphorylribose-1-pyrophosphate (PRPP) to anthranilate to yield N-(5'-phosphoribosyl)-anthranilate (PRA). In Haemophilus influenzae (strain PittEE), this protein is Anthranilate phosphoribosyltransferase.